The chain runs to 641 residues: Chaperone protein DnaK (641 aa).

At threonine 200 the chain carries Phosphothreonine; by autocatalysis. Residues 605 to 623 (AAEQGGSADAASGNAQASK) are compositionally biased toward low complexity. The interval 605-627 (AAEQGGSADAASGNAQASKAADD) is disordered.

The protein belongs to the heat shock protein 70 family.

Acts as a chaperone. This Xanthomonas oryzae pv. oryzae (strain MAFF 311018) protein is Chaperone protein DnaK.